Here is a 399-residue protein sequence, read N- to C-terminus: P2X purinoceptor 1 (399 aa).

Residues 1-28 (MARRLQDELSAFFFEYDTPRMVLVRNKK) are Cytoplasmic-facing. The chain crosses the membrane as a helical span at residues 29 to 50 (VGVIFRLIQLVVLVYVIGWVFV). At 51 to 338 (YEKGYQTSSG…IPTMTTIGSG (288 aa)) the chain is on the extracellular side. Residues Lys68, Lys70, and Lys140 each contribute to the CTP site. Lys70 lines the ATP pocket. Intrachain disulfides connect Cys117/Cys165, Cys126/Cys149, and Cys132/Cys159. 2 N-linked (GlcNAc...) asparagine glycosylation sites follow: Asn153 and Asn184. Thr186 contributes to the CTP binding site. Thr186 is an ATP binding site. An N-linked (GlcNAc...) asparagine glycan is attached at Asn210. Intrachain disulfides connect Cys217–Cys227 and Cys261–Cys270. ATP is bound by residues Ser286, Asn290, and Arg292. CTP contacts are provided by Asn290 and Arg292. An N-linked (GlcNAc...) asparagine glycan is attached at Asn300. Lys309 provides a ligand contact to CTP. Lys309 is an ATP binding site. Residues 331–338 (TMTTIGSG) form a pore-forming motif region. Residues 339-358 (IGIFGVATVLCDLLLLHILP) traverse the membrane as a helical segment. The Cytoplasmic portion of the chain corresponds to 359 to 399 (KRHYYKQKKFKYAEDMGPGEGERDPAATSSTLGLQENMRTS). The segment at 374-399 (MGPGEGERDPAATSSTLGLQENMRTS) is disordered. Positions 385–399 (ATSSTLGLQENMRTS) are enriched in polar residues. 2 positions are modified to phosphoserine: Ser387 and Ser388. The residue at position 389 (Thr389) is a Phosphothreonine.

This sequence belongs to the P2X receptor family. In terms of assembly, functional P2XRs are organized as homomeric and heteromeric trimers. Forms heterodimer with P2RX2. Forms heterodimer with P2RX4. Forms heterodimer with P2RX5. In terms of tissue distribution, expressed in smooth muscle of the bladder and arteries.

It localises to the cell membrane. It carries out the reaction Ca(2+)(in) = Ca(2+)(out). The catalysed reaction is K(+)(in) = K(+)(out). The enzyme catalyses Na(+)(in) = Na(+)(out). With respect to regulation, activated by low concentrations of ATP (&lt;1 uM). Undergoes rapid desensitisation. Sensitives to the ATP agonist:alpha/beta-methylene-ATP. Modulated by cholesterol. ATP-gated nonselective transmembrane cation channel permeable to potassium, sodium and with relatively high calcium permeability. Furthermore, CTP functions as a weak affinity agonist for P2RX1. Plays a role in male fertility, bladder contraction and platelet aggregation. Specifically, plays an important role in neurogenic contraction of smooth muscle of the vas deferens, and therefore is essential for normal male reproductive function. In addition, contributes to smooth muscle contractions of the urinary bladder. On platelets, contributes to platelet activation and aggregation and thereby, also to thrombosis. On neutrophils, it is involved in chemotaxis and in mitigating the activation of circulating cells. The polypeptide is P2X purinoceptor 1 (P2rx1) (Mus musculus (Mouse)).